The following is a 440-amino-acid chain: Lysine histidine transporter-like 6 (440 aa).

Residues 1–10 (MVSSSPVSPS) show a composition bias toward polar residues. The interval 1–25 (MVSSSPVSPSKETDRKSGEKWTAED) is disordered. Residues 1 to 31 (MVSSSPVSPSKETDRKSGEKWTAEDPSRPAK) lie on the Cytoplasmic side of the membrane. The segment covering 11 to 25 (KETDRKSGEKWTAED) has biased composition (basic and acidic residues). A helical transmembrane segment spans residues 32 to 51 (WWYSTFHTVTAMIGAGVLSL). The Extracellular portion of the chain corresponds to 52–61 (PYAMAYLGWG). Residues 62-82 (PGTFVLAMTWGLTLNTMWQMV) form a helical membrane-spanning segment. At 83 to 109 (QLHECVPGTRFDRYIDLGRYAFGPKLG) the chain is on the cytoplasmic side. Residues 110 to 130 (PWIVLPQQLIVQVGCNIVYMV) traverse the membrane as a helical segment. At 131-152 (TGGKCLKQFVEITCSTCTPVRQ) the chain is on the extracellular side. A helical transmembrane segment spans residues 153-173 (SYWILGFGGVHFILSQLPNFN). A topological domain (cytoplasmic) is located at residue Ser-174. The helical transmembrane segment at 175-195 (VAGVSLAAAVMSLCYSTIAWG) threads the bilayer. Over 196 to 221 (GSIAHGRVPDVSYDYKATNPGDFTFR) the chain is Extracellular. A helical transmembrane segment spans residues 222-242 (VFNALGQISFAFAGHAVALEI). At 243-261 (QATMPSTPERPSKVPMWQG) the chain is on the cytoplasmic side. A helical membrane pass occupies residues 262–282 (VIGAYVVNAVCYFPVALICYW). The Extracellular portion of the chain corresponds to 283-300 (AFGQDVDDNVLMNLQRPA). The helical transmembrane segment at 301 to 321 (WLIAAANLMVVVHVIGSYQVF) threads the bilayer. Residues 322-353 (AMPVFDLLERMMVNKFGFKHGVVLRFFTRTIY) are Cytoplasmic-facing. 2 helical membrane-spanning segments follow: residues 354 to 374 (VAFT…LGFF) and 375 to 395 (GGFG…LIIK). Residues 396–399 (KPRR) lie on the Cytoplasmic side of the membrane. Residues 400–420 (FSVTWFVNWISIIVGVFIMLA) form a helical membrane-spanning segment. The Extracellular portion of the chain corresponds to 421 to 440 (STIGGLRNIIADSSTYSFYA).

This sequence belongs to the amino acid/polyamine transporter 2 family. Amino acid/auxin permease (AAAP) (TC 2.A.18.2) subfamily.

Its subcellular location is the cell membrane. Amino acid transporter. In Arabidopsis thaliana (Mouse-ear cress), this protein is Lysine histidine transporter-like 6.